The primary structure comprises 168 residues: Photosystem I assembly protein Ycf3 (168 aa).

TPR repeat units lie at residues 35 to 68 (AFTYYRDGISAQSEGNYAEALQNYYEAMRLEIDP), 72 to 105 (SYILYNIGLIHTSNGEHTKALEYYFRALERNSFL), and 120 to 153 (GEQAIRQGDSEIAEAWFDQAAEYWKQAIALTPGN).

The protein belongs to the Ycf3 family.

It is found in the plastid. The protein localises to the chloroplast thylakoid membrane. Functionally, essential for the assembly of the photosystem I (PSI) complex. May act as a chaperone-like factor to guide the assembly of the PSI subunits. This Jasminum nudiflorum (Winter jasmine) protein is Photosystem I assembly protein Ycf3.